The following is a 77-amino-acid chain: Cysteine-rich protein 1 (77 aa).

The region spanning 2–63 (PKCPKCDKEV…HPCYSAMFGP (62 aa)) is the LIM zinc-binding domain. An N6-acetyllysine mark is found at Lys-9 and Lys-22. Arg-68 carries the omega-N-methylarginine modification.

Seems to have a role in zinc absorption and may function as an intracellular zinc transport protein. This Mus musculus (Mouse) protein is Cysteine-rich protein 1 (Crip1).